Reading from the N-terminus, the 220-residue chain is Type IV major pilin protein PilA (220 aa).

A propeptide spans 1-12 (MRVSRFNPRNRG) (leader sequence). Phe13 is subject to N-methylphenylalanine. A helical membrane pass occupies residues 13–33 (FTLIELMIVVAIIGILAAIAI).

It belongs to the N-Me-Phe pilin family.

Its subcellular location is the fimbrium. The protein localises to the membrane. Its activity is regulated as follows. The two-component PilS2/PilR2 is required for proper assembly of T4P and regulation. Major component of the type IV pili that are required for social gliding motility through cycles of extension and retraction. Extended pili are composed of thousands of copies of PilA and retract upon binding to extracellular polysaccharides and thereby pull the cell forward. The chain is Type IV major pilin protein PilA (pilA) from Myxococcus xanthus (strain DK1622).